The sequence spans 395 residues: F-box/LRR-repeat protein 12 (395 aa).

The F-box domain maps to 13–61 (TSIIHLPDDCLSFIFQRLDSVADHDSFGLTCHRWLNIQNISRRSLQFQC). 10 LRR repeats span residues 75–100 (NPDVSSHHLHRLLTRFQWLEHLSLSG), 101–126 (CTVLNDSSLDSLRYPGARLHTLYLDC), 127–152 (CFGISDDGISTIASFCPNLSVVSLYR), 154–177 (NISDIGLETLARASLSLKCVNLSY), 178–203 (CPLVSDFGIKALSQACLQLESVKISN), 226–250 (SCQLEPKGITGIISGGGIEFLNISG), 252–278 (SCYIRKDGLVPIGSGIASKLRILNLRM), 279–304 (CRTVGDESIEAIAKGCPLLQEWNLAL), 305–330 (CHEVKISGWEAVGKWCRNLKKLHVNR), and 331–356 (CRNLCDQGLLALRCGCMNLQILYMNG).

The polypeptide is F-box/LRR-repeat protein 12 (FBL12) (Arabidopsis thaliana (Mouse-ear cress)).